A 797-amino-acid chain; its full sequence is G-patch domain-containing protein C1486.03 (797 aa).

The segment covering Met-1–Ser-12 has biased composition (polar residues). 2 disordered regions span residues Met-1 to Gln-33 and Val-159 to Glu-204. The G-patch domain maps to Thr-115–Glu-161. The segment covering Val-159–Thr-185 has biased composition (basic and acidic residues). Over residues Val-186 to Leu-199 the composition is skewed to basic residues.

It belongs to the TFP11/STIP family.

The protein localises to the cytoplasm. It is found in the cytoskeleton. The protein resides in the microtubule organizing center. Its subcellular location is the spindle pole body. In Schizosaccharomyces pombe (strain 972 / ATCC 24843) (Fission yeast), this protein is G-patch domain-containing protein C1486.03.